The following is a 59-amino-acid chain: Large ribosomal subunit protein bL32 (59 aa).

Residues 1–20 (MAVQKNKPTRSKRGMRRSHD) are disordered. A compositionally biased stretch (basic residues) spans 7–19 (KPTRSKRGMRRSH).

It belongs to the bacterial ribosomal protein bL32 family.

In Wigglesworthia glossinidia brevipalpis, this protein is Large ribosomal subunit protein bL32.